We begin with the raw amino-acid sequence, 73 residues long: Nodulin-1 (73 aa).

Positions 1–23 (MERKTLASLCFFLIVLLAAQVVA) are cleaved as a signal peptide. 3 disulfides stabilise this stretch: Cys39-Cys64, Cys49-Cys71, and Cys53-Cys73.

Expressed in nodules, but not in leaves, stems, flowers and roots. In developing nodules, expressed close to the infection threads.

It localises to the secreted. In terms of biological role, nodulation-related protein probably involved in the infection process. The polypeptide is Nodulin-1 (N1) (Medicago truncatula (Barrel medic)).